Reading from the N-terminus, the 85-residue chain is U4-theraphotoxin-Hhn1a (85 aa).

Residues 1–22 form the signal peptide; the sequence is MKVTLIAILTCAAVLVLHTTAA. A propeptide spanning residues 23–48 is cleaved from the precursor; sequence EELEAESQLMEVGMPDTELAAVDEER. Intrachain disulfides connect C52–C66, C56–C77, and C71–C82.

This sequence belongs to the neurotoxin 12 (Hwtx-2) family. 02 (Hwtx-2) subfamily. Monomer. Expressed by the venom gland.

It localises to the secreted. Functionally, neurotoxin active on both insects and mammals. This Cyriopagopus hainanus (Chinese bird spider) protein is U4-theraphotoxin-Hhn1a.